Reading from the N-terminus, the 459-residue chain is FBD-associated F-box protein At1g61320 (459 aa).

The tract at residues 1–25 (MAPPTKRTRVEMAESSNKRMKPSET) is disordered. The 49-residue stretch at 21 to 69 (KPSETVPEDVLELMMSTYLPVQSLLTTRVLSKRFRETEVRSLDLDFSGI) folds into the F-box domain. The FBD domain maps to 396 to 428 (VKIIGYKGHWHELDIVEFFVKNAPSLKRLELQM).

The chain is FBD-associated F-box protein At1g61320 from Arabidopsis thaliana (Mouse-ear cress).